A 361-amino-acid chain; its full sequence is Putative pumilio homolog 22 (361 aa).

The PUM-HD domain maps to 5-348; the sequence is RGYDLASQVL…NIVAIIDSET (344 aa). 2 Pumilio repeats span residues 27–63 and 64–103; these read HITY…EFLD and LIAQ…RLHE. The Pumilio 3; degenerate repeat unit spans residues 104 to 131; it reads LMAEFDEVLSTSVTADVDKLHKLASKLM. The stretch at 132 to 167 is one Pumilio 4 repeat; sequence LDSDLFFEFVITRRGSLMIQIILGKSEEVDQVILAG. The stretch at 168–205 is one Pumilio 5; degenerate repeat; it reads VKQRFIDVTTNFYGYRIMIQTIKVFKKRGDLKVYDQIL. The Pumilio 6; degenerate repeat unit spans residues 206–243; sequence RLIGVHALYLTKDPDMGNKTFQHAINLHHQDCTTFIAC. Pumilio repeat units lie at residues 244–284 and 285–319; these read GLQS…EIVK and CDED…DFFG.

The protein resides in the cytoplasm. Its function is as follows. Sequence-specific RNA-binding protein that regulates translation and mRNA stability by binding the 3'-UTR of target mRNAs. In Arabidopsis thaliana (Mouse-ear cress), this protein is Putative pumilio homolog 22 (APUM22).